The following is a 308-amino-acid chain: Putative gluconeogenesis factor (308 aa).

It belongs to the gluconeogenesis factor family.

It localises to the cytoplasm. Required for morphogenesis under gluconeogenic growth conditions. In Pasteurella multocida (strain Pm70), this protein is Putative gluconeogenesis factor.